We begin with the raw amino-acid sequence, 117 residues long: Small ribosomal subunit protein bS6m (117 aa).

The protein belongs to the bacterial ribosomal protein bS6 family. In terms of assembly, component of the mitochondrial small ribosomal subunit (mt-SSU). Mature N.crassa 74S mitochondrial ribosomes consist of a small (37S) and a large (54S) subunit. The 37S small subunit contains a 16S ribosomal RNA (16S mt-rRNA) and 32 different proteins. The 54S large subunit contains a 23S rRNA (23S mt-rRNA) and 42 different proteins.

The protein resides in the mitochondrion. Functionally, component of the mitochondrial ribosome (mitoribosome), a dedicated translation machinery responsible for the synthesis of mitochondrial genome-encoded proteins, including at least some of the essential transmembrane subunits of the mitochondrial respiratory chain. The mitoribosomes are attached to the mitochondrial inner membrane and translation products are cotranslationally integrated into the membrane. In Neurospora crassa (strain ATCC 24698 / 74-OR23-1A / CBS 708.71 / DSM 1257 / FGSC 987), this protein is Small ribosomal subunit protein bS6m (mrp17).